We begin with the raw amino-acid sequence, 409 residues long: F-box/kelch-repeat protein At2g44130 (409 aa).

The F-box domain maps to 17–63 (HELIPGLPSELALECLVRVPFQFQSAMRSVCRSWRSLLSDSSFIQER). 4 Kelch repeats span residues 98–148 (KKSE…VLQD), 151–199 (KILL…SVSP), 201–248 (KVYV…AVGM), and 251–300 (RFCV…RTAG).

In Arabidopsis thaliana (Mouse-ear cress), this protein is F-box/kelch-repeat protein At2g44130.